The primary structure comprises 369 residues: 3-isopropylmalate dehydrogenase (369 aa).

Residue 76 to 89 participates in NAD(+) binding; that stretch reads GPKWDRNPSHLRPE. Substrate is bound by residues Arg-96, Arg-106, Arg-134, and Asp-223. The Mg(2+) site is built by Asp-223, Asp-247, and Asp-251. Residue 281 to 293 coordinates NAD(+); that stretch reads GSAPDIAGQNKAN.

It belongs to the isocitrate and isopropylmalate dehydrogenases family. LeuB type 1 subfamily. Homodimer. Mg(2+) is required as a cofactor. Requires Mn(2+) as cofactor.

It localises to the cytoplasm. The catalysed reaction is (2R,3S)-3-isopropylmalate + NAD(+) = 4-methyl-2-oxopentanoate + CO2 + NADH. It participates in amino-acid biosynthesis; L-leucine biosynthesis; L-leucine from 3-methyl-2-oxobutanoate: step 3/4. Its function is as follows. Catalyzes the oxidation of 3-carboxy-2-hydroxy-4-methylpentanoate (3-isopropylmalate) to 3-carboxy-4-methyl-2-oxopentanoate. The product decarboxylates to 4-methyl-2 oxopentanoate. This chain is 3-isopropylmalate dehydrogenase (leuB), found in Priestia megaterium (strain DSM 319 / IMG 1521) (Bacillus megaterium).